The chain runs to 136 residues: Small ribosomal subunit protein uS12 (136 aa).

The tract at residues 1–28 is disordered; sequence MPTIQQLIRSERQELKKKTKSPALKSCP. Position 89 is a 3-methylthioaspartic acid (Asp-89). Residues 101-136 form a disordered region; that stretch reads TLDTAGVKDRKQGRSKYGAKRPKPGAASTASTGKKR. The span at 113–123 shows a compositional bias: basic residues; the sequence is GRSKYGAKRPK.

This sequence belongs to the universal ribosomal protein uS12 family. In terms of assembly, part of the 30S ribosomal subunit. Contacts proteins S8 and S17. May interact with IF1 in the 30S initiation complex.

With S4 and S5 plays an important role in translational accuracy. Functionally, interacts with and stabilizes bases of the 16S rRNA that are involved in tRNA selection in the A site and with the mRNA backbone. Located at the interface of the 30S and 50S subunits, it traverses the body of the 30S subunit contacting proteins on the other side and probably holding the rRNA structure together. The combined cluster of proteins S8, S12 and S17 appears to hold together the shoulder and platform of the 30S subunit. This chain is Small ribosomal subunit protein uS12, found in Cyanothece sp. (strain PCC 7425 / ATCC 29141).